Here is a 575-residue protein sequence, read N- to C-terminus: Beta-amylase 1, chloroplastic (575 aa).

The transit peptide at 1 to 41 (MALNLSHQLGVLAGTPIKSGEMTDSSLLSISPPSARMMTPK) directs the protein to the chloroplast. S55 and S59 each carry phosphoserine. C73 and C511 form a disulfide bridge. The substrate site is built by D147, H187, and D195. E279 acts as the Proton donor in catalysis. K392, H397, and T439 together coordinate substrate. Catalysis depends on E477, which acts as the Proton acceptor. Residues 478-479 (NA) and R517 each bind substrate.

This sequence belongs to the glycosyl hydrolase 14 family. In terms of tissue distribution, expressed in leaves, roots, flowers, pollen, and seeds.

The protein resides in the plastid. It is found in the chloroplast. The catalysed reaction is Hydrolysis of (1-&gt;4)-alpha-D-glucosidic linkages in polysaccharides so as to remove successive maltose units from the non-reducing ends of the chains.. Redox regulation; active in reducing conditions, inactive in oxidizing conditions. Thioredoxins f1, m1, and y1 mediate the reversible reductive activation of oxidized BAM1. In terms of biological role, beta-amylase activity. Can use p-nitrophenyl maltopentaoside (PNPG5) as substrate only in reduced form. Can play a minor role in the starch degradation and maltose metabolism in chloroplasts during the night. More active on phosphorylated glucan. Interacts directly with starch or other alpha-1,4-glucan. The polypeptide is Beta-amylase 1, chloroplastic (BAM1) (Arabidopsis thaliana (Mouse-ear cress)).